The chain runs to 185 residues: Lipid A acyltransferase PagP (185 aa).

A signal peptide spans 1–24; that stretch reads MKTHNDILAALAALPLFLTGAAFA. Catalysis depends on residues histidine 57, aspartate 100, and serine 101.

The protein belongs to the lipid A palmitoyltransferase family. Homodimer.

The protein localises to the cell outer membrane. It catalyses the reaction a lipid A + a 1,2-diacyl-sn-glycero-3-phosphocholine = a hepta-acyl lipid A + a 2-acyl-sn-glycero-3-phosphocholine. It carries out the reaction a lipid IVA + a 1,2-diacyl-sn-glycero-3-phosphocholine = a lipid IVB + a 2-acyl-sn-glycero-3-phosphocholine. The catalysed reaction is a lipid IIA + a 1,2-diacyl-sn-glycero-3-phosphocholine = a lipid IIB + a 2-acyl-sn-glycero-3-phosphocholine. Transfers a fatty acid residue from the sn-1 position of a phospholipid to the N-linked hydroxyfatty acid chain on the proximal unit of lipid A or its precursors. The protein is Lipid A acyltransferase PagP of Edwardsiella tarda (strain FL6-60).